The primary structure comprises 156 residues: Nuclear cap-binding protein subunit 2 (156 aa).

An N-acetylserine modification is found at Ser-2. Residues Ser-13 and Ser-18 each carry the phosphoserine modification. Residues Tyr-20, Tyr-43, 112 to 116 (RTDWD), 123 to 127 (RQYGR), and 133 to 134 (QV) contribute to the mRNA site. Residues 40–118 (CTLYVGNLSF…RIIRTDWDAG (79 aa)) enclose the RRM domain. The interval 124–156 (QYGRGRSGGQVRDEYREDYDAGRGGYGKLAQKQ) is disordered. The segment covering 134–144 (VRDEYREDYDA) has biased composition (basic and acidic residues). Residue Arg-146 is modified to Omega-N-methylarginine.

It belongs to the RRM NCBP2 family. In terms of assembly, component of the nuclear cap-binding complex (CBC), a heterodimer composed of NCBP1/CBP80 and NCBP2/CBP20 that interacts with m7GpppG-capped RNA. Found in a U snRNA export complex with PHAX/RNUXA, NCBP1/CBP80, NCBP2/CBP20, RAN, XPO1 and m7G-capped RNA. Interacts with PHAX/RNUXA, EIF4G1, HNRNPF, HNRNPH1 and ALYREF/THOC4/ALY. Interacts with SRRT/ARS2 and KPNA3.

It is found in the nucleus. The protein resides in the cytoplasm. Component of the cap-binding complex (CBC), which binds co-transcriptionally to the 5' cap of pre-mRNAs and is involved in various processes such as pre-mRNA splicing, translation regulation, nonsense-mediated mRNA decay, RNA-mediated gene silencing (RNAi) by microRNAs (miRNAs) and mRNA export. The CBC complex is involved in mRNA export from the nucleus via its interaction with ALYREF/THOC4/ALY, leading to the recruitment of the mRNA export machinery to the 5' end of mRNA and to mRNA export in a 5' to 3' direction through the nuclear pore. The CBC complex is also involved in mediating U snRNA and intronless mRNAs export from the nucleus. The CBC complex is essential for a pioneer round of mRNA translation, before steady state translation when the CBC complex is replaced by cytoplasmic cap-binding protein eIF4E. The pioneer round of mRNA translation mediated by the CBC complex plays a central role in nonsense-mediated mRNA decay (NMD), NMD only taking place in mRNAs bound to the CBC complex, but not on eIF4E-bound mRNAs. The CBC complex enhances NMD in mRNAs containing at least one exon-junction complex (EJC) via its interaction with UPF1, promoting the interaction between UPF1 and UPF2. The CBC complex is also involved in 'failsafe' NMD, which is independent of the EJC complex, while it does not participate in Staufen-mediated mRNA decay (SMD). During cell proliferation, the CBC complex is also involved in microRNAs (miRNAs) biogenesis via its interaction with SRRT/ARS2, thereby being required for miRNA-mediated RNA interference. The CBC complex also acts as a negative regulator of PARN, thereby acting as an inhibitor of mRNA deadenylation. In the CBC complex, NCBP2/CBP20 recognizes and binds capped RNAs (m7GpppG-capped RNA) but requires NCBP1/CBP80 to stabilize the movement of its N-terminal loop and lock the CBC into a high affinity cap-binding state with the cap structure. The conventional cap-binding complex with NCBP2 binds both small nuclear RNA (snRNA) and messenger (mRNA) and is involved in their export from the nucleus. This chain is Nuclear cap-binding protein subunit 2 (Ncbp2), found in Mus musculus (Mouse).